A 607-amino-acid polypeptide reads, in one-letter code: Elongation factor 4 (607 aa).

In terms of domain architecture, tr-type G spans glutamate 11 to aspartate 193. Residues aspartate 23–threonine 28 and asparagine 140–aspartate 143 contribute to the GTP site.

Belongs to the TRAFAC class translation factor GTPase superfamily. Classic translation factor GTPase family. LepA subfamily.

The protein resides in the cell membrane. It catalyses the reaction GTP + H2O = GDP + phosphate + H(+). Required for accurate and efficient protein synthesis under certain stress conditions. May act as a fidelity factor of the translation reaction, by catalyzing a one-codon backward translocation of tRNAs on improperly translocated ribosomes. Back-translocation proceeds from a post-translocation (POST) complex to a pre-translocation (PRE) complex, thus giving elongation factor G a second chance to translocate the tRNAs correctly. Binds to ribosomes in a GTP-dependent manner. In Staphylococcus aureus (strain MW2), this protein is Elongation factor 4.